The primary structure comprises 222 residues: Transcriptional regulatory protein BasR (222 aa).

Positions 2–116 (KILIVEDDTL…ELHARIRALL (115 aa)) constitute a Response regulatory domain. D51 carries the post-translational modification 4-aspartylphosphate. The ompR/PhoB-type DNA-binding region spans 124 to 218 (ESELIVGNLT…VRGFGYMLVA (95 aa)).

As to quaternary structure, homodimer. In terms of processing, phosphorylated by BasS.

It localises to the cytoplasm. Its function is as follows. Member of the two-component regulatory system BasS/BasR. BasR induces the transcription of the ugd, ais, arnBCADTEF and eptA-basRS loci, all involved in resistance to polymyxin. In Escherichia coli (strain K12), this protein is Transcriptional regulatory protein BasR (basR).